Consider the following 286-residue polypeptide: Probable aquaporin PIP-type pTOM75 (286 aa).

Residues 1–35 form a disordered region; that stretch reads MAENKEEDVKLGANKFRETQPLGTAAQTDKDYKEP. Residues 1–55 lie on the Cytoplasmic side of the membrane; the sequence is MAENKEEDVKLGANKFRETQPLGTAAQTDKDYKEPPPAPLFEPGELSSWSFYRAG. Residues 7–18 are compositionally biased toward basic and acidic residues; sequence EDVKLGANKFRE. The helical transmembrane segment at 56 to 76 threads the bilayer; that stretch reads IAEFMATFLFLYITILTVMGL. Residues 77–89 lie on the Extracellular side of the membrane; sequence KRSDSLCSSVGIQ. A helical membrane pass occupies residues 90–110; the sequence is GVAWAFGGMIFALVYCTAGIS. Over 111-133 the chain is Cytoplasmic; it reads GGHINPAVTFGLFLARKLSLTRA. Positions 115 to 117 match the NPA 1 motif; sequence NPA. The chain crosses the membrane as a helical span at residues 134–154; the sequence is VFYMVMQCLGAICGAGVVKGF. Over 155–175 the chain is Extracellular; it reads MVGPYQRLGGGANVVNPGYTK. The helical transmembrane segment at 176 to 196 threads the bilayer; sequence GDGLGAEIIGTFVLVYTVFSA. The Cytoplasmic segment spans residues 197 to 209; the sequence is TDAKRNARDSHVP. The chain crosses the membrane as a helical span at residues 210 to 230; the sequence is ILAPLPIGFAVFLVHLATIPI. The Extracellular portion of the chain corresponds to 231-257; it reads TGTGINPARSLGAAIIYNDEHAWNDHW. The NPA 2 signature appears at 236–238; that stretch reads NPA. The helical transmembrane segment at 258-278 threads the bilayer; that stretch reads IFWVGPMIGAALAAIYHQIII. The Cytoplasmic segment spans residues 279–286; the sequence is RAMPFHRS.

This sequence belongs to the MIP/aquaporin (TC 1.A.8) family. PIP (TC 1.A.8.11) subfamily. As to expression, roots, ripening fruit and senescing leaves.

It localises to the cell membrane. Functionally, aquaporins facilitate the transport of water and small neutral solutes across cell membranes. In Solanum lycopersicum (Tomato), this protein is Probable aquaporin PIP-type pTOM75.